A 348-amino-acid polypeptide reads, in one-letter code: Lipoyl synthase (348 aa).

The segment at 1–45 (MSESAKPRITSGSKFRNEHGFSAIKDGVKRSSSNTEGKSLERKPK) is disordered. [4Fe-4S] cluster contacts are provided by cysteine 73, cysteine 78, cysteine 84, cysteine 99, cysteine 103, cysteine 106, and serine 314. Residues 85-303 (WTNGTATIMV…RDIGLEKGFM (219 aa)) enclose the Radical SAM core domain.

This sequence belongs to the radical SAM superfamily. Lipoyl synthase family. The cofactor is [4Fe-4S] cluster.

It is found in the cytoplasm. The catalysed reaction is [[Fe-S] cluster scaffold protein carrying a second [4Fe-4S](2+) cluster] + N(6)-octanoyl-L-lysyl-[protein] + 2 oxidized [2Fe-2S]-[ferredoxin] + 2 S-adenosyl-L-methionine + 4 H(+) = [[Fe-S] cluster scaffold protein] + N(6)-[(R)-dihydrolipoyl]-L-lysyl-[protein] + 4 Fe(3+) + 2 hydrogen sulfide + 2 5'-deoxyadenosine + 2 L-methionine + 2 reduced [2Fe-2S]-[ferredoxin]. It functions in the pathway protein modification; protein lipoylation via endogenous pathway; protein N(6)-(lipoyl)lysine from octanoyl-[acyl-carrier-protein]: step 2/2. In terms of biological role, catalyzes the radical-mediated insertion of two sulfur atoms into the C-6 and C-8 positions of the octanoyl moiety bound to the lipoyl domains of lipoate-dependent enzymes, thereby converting the octanoylated domains into lipoylated derivatives. This Marinobacter nauticus (strain ATCC 700491 / DSM 11845 / VT8) (Marinobacter aquaeolei) protein is Lipoyl synthase.